The following is a 511-amino-acid chain: Acidic amino acid decarboxylase GADL1 (511 aa).

Lysine 323 is subject to N6-(pyridoxal phosphate)lysine.

This sequence belongs to the group II decarboxylase family. Homodimer. Pyridoxal 5'-phosphate serves as cofactor.

It catalyses the reaction L-aspartate + H(+) = beta-alanine + CO2. The enzyme catalyses 3-sulfino-L-alanine + H(+) = hypotaurine + CO2. Its function is as follows. Catalyzes the decarboxylation of L-aspartate, 3-sulfino-L-alanine (cysteine sulfinic acid), and L-cysteate to beta-alanine, hypotaurine and taurine, respectively. The preferred substrate is L-aspartate. Does not exhibit any decarboxylation activity toward glutamate. In Xenopus tropicalis (Western clawed frog), this protein is Acidic amino acid decarboxylase GADL1 (gadl1).